Reading from the N-terminus, the 183-residue chain is Gamma-crystallin N (183 aa).

4 Beta/gamma crystallin 'Greek key' domains span residues 6–46 (GKIT…RVES), 47–89 (GAWV…RPVG), 95–136 (FRID…KVYG), and 138–180 (GAWV…RRVL).

It belongs to the beta/gamma-crystallin family. As to quaternary structure, monomer. In terms of tissue distribution, primordially eye-specific. Present in lens nucleus. In the retina, expression in observed in the outer plexiform layer (containing photoreceptors axons and synapses) and photoreceptor outer segments (at protein level). Also detected in the auditory hindbrain where it is highly expressed in the medial nucleus of the trapezoid body, but also present in other nuclei of the superior olivary complex.

Functionally, crystallins are the dominant structural components of the vertebrate eye lens. Also plays an important role for integrity and function of auditory nuclei. This is Gamma-crystallin N from Mus musculus (Mouse).